We begin with the raw amino-acid sequence, 968 residues long: MSDRTSASSSSRRTKQNYDAIGSFVIDQEIGKGSFAKVYLGRHKVTGALVAVKSVELARLNKKLKENLYGEIQILKTLRHPHIVALHDCVESSTHINLIMEYCELGDLSLFIKKRDKLITNPYTHDLARKYPVYPNAGLNEVVTRHFLKQLASALQFLRAGDFVHRDVKPQNLLLLPSPHMMANNKTAKHIMSGSYDSFTPAAGLASAPMLKLADFGFARVLPSTSLAETLCGSPLYMAPEILRYEKYDAKADLWSVGTVLYEMVTGRPPFKASNHVELLRKIESSGDVIKFTRESVVSQEMKGLIRALLKKNPVERISFEDLFNHPVVTEPIPGLVEDDIPKPPRRRSLKEERPVSRAEDSLVPSRKQSLRKDLADREGAPQTAGPSSPKPRRSSPLATPNEPVEISKPNYFQIPPREDRLSYSPRKEAADGLGIKRPQVQPSTSAPTRPSSYVDRRHRSSNASLRAPVREANPPPNDVTRTKPRGMGTKPMTEEERAAQDIAFERDYVLVDKKHLEVNALADQISMYPQQPQSPKSAQIVRRATQQGSPTSTSGAVPSPPSRALQLAQGHSRQGSYDKALGTSPSKATSVISKAIQDASLRLFGFKYAPHLLSKGPSPVPMYNPFPTYPAPNTPTGLISDGKQGTPVDEDSRVAQCIEDHATRSDVVYGFAEVKYKQLVPLAPSMDHGLGGAPIEKSAEEDGLTAEAIVSLSEEALVLYVKALTLLAKSMDIASLWWSRKNKVESTNSITSAARDSANSEALALRINGAVQWIRSRFNEVLEKAEIVRLKLAEAQKRLPEDHPSHPNNHANDSTALNSLSTVGVFLSEGISAERLMYDRAIEMSRAAAINEIANEDLPGCEISYITAIRMLEAVLDQDDDHLPKRKVSGASKEEKTGANELSDEMNNEDKQVVQNVINMVNNRLTVLRKKLRLIESASKAQQQEEQKQQNLMRRRSGEMTSRSVPA.

The Protein kinase domain maps to 24-329; it reads FVIDQEIGKG…FEDLFNHPVV (306 aa). Residues 30–38 and lysine 53 each bind ATP; that span reads IGKGSFAKV. The active-site Proton acceptor is aspartate 167. 4 disordered regions span residues 334 to 500, 528 to 585, 884 to 906, and 939 to 968; these read PGLV…ERAA, MYPQ…LGTS, LPKRKVSGASKEEKTGANELSDE, and ASKAQQQEEQKQQNLMRRRSGEMTSRSVPA. 3 stretches are compositionally biased toward basic and acidic residues: residues 350 to 361, 371 to 380, and 417 to 431; these read LKEERPVSRAED, LRKDLADREG, and PREDRLSYSPRKEAA. 3 stretches are compositionally biased toward polar residues: residues 441–452, 528–538, and 545–557; these read VQPSTSAPTRPS, MYPQQPQSPKS, and ATQQGSPTSTSGA.

It belongs to the protein kinase superfamily. Ser/Thr protein kinase family. APG1/unc-51/ULK1 subfamily. In terms of assembly, homodimer. Forms a ternary complex with ATG13 and ATG17.

It is found in the cytoplasm. The protein localises to the preautophagosomal structure membrane. It catalyses the reaction L-seryl-[protein] + ATP = O-phospho-L-seryl-[protein] + ADP + H(+). It carries out the reaction L-threonyl-[protein] + ATP = O-phospho-L-threonyl-[protein] + ADP + H(+). Its function is as follows. Serine/threonine protein kinase involved in the cytoplasm to vacuole transport (Cvt) and found to be essential in autophagy, where it is required for the formation of autophagosomes. Involved in the clearance of protein aggregates which cannot be efficiently cleared by the proteasome. Required for selective autophagic degradation of the nucleus (nucleophagy) as well as for mitophagy which contributes to regulate mitochondrial quantity and quality by eliminating the mitochondria to a basal level to fulfill cellular energy requirements and preventing excess ROS production. Also involved in endoplasmic reticulum-specific autophagic process, in selective removal of ER-associated degradation (ERAD) substrates. Plays a key role in ATG9 and ATG23 cycling through the pre-autophagosomal structure and is necessary to promote ATG18 binding to ATG9 through phosphorylation of ATG9. Catalyzes phosphorylation of ATG4, decreasing the interaction between ATG4 and ATG8 and impairing deconjugation of PE-conjugated forms of ATG8. This chain is Serine/threonine-protein kinase apg-1, found in Neurospora crassa (strain ATCC 24698 / 74-OR23-1A / CBS 708.71 / DSM 1257 / FGSC 987).